The primary structure comprises 186 residues: Ribosome-recycling factor (186 aa).

Belongs to the RRF family.

It localises to the cytoplasm. Functionally, responsible for the release of ribosomes from messenger RNA at the termination of protein biosynthesis. May increase the efficiency of translation by recycling ribosomes from one round of translation to another. This chain is Ribosome-recycling factor, found in Rickettsia bellii (strain OSU 85-389).